Here is a 332-residue protein sequence, read N- to C-terminus: Melanocortin receptor 4 (332 aa).

Residues methionine 1–glutamine 43 lie on the Extracellular side of the membrane. N-linked (GlcNAc...) asparagine glycans are attached at residues asparagine 3, asparagine 17, and asparagine 26. 2 disulfides stabilise this stretch: cysteine 40–cysteine 279 and cysteine 271–cysteine 277. Residues leucine 44–isoleucine 69 form a helical membrane-spanning segment. At alanine 70–phenylalanine 81 the chain is on the cytoplasmic side. Residues phenylalanine 82–leucine 106 form a helical membrane-spanning segment. Ca(2+) contacts are provided by glutamate 100, aspartate 122, and aspartate 126. Residues leucine 107 to asparagine 123 lie on the Extracellular side of the membrane. Residues valine 124–valine 145 traverse the membrane as a helical segment. Residues aspartate 146–arginine 165 are Cytoplasmic-facing. The chain crosses the membrane as a helical span at residues valine 166 to isoleucine 186. At tyrosine 187–serine 191 the chain is on the extracellular side. The chain crosses the membrane as a helical span at residues alanine 192–methionine 215. The Cytoplasmic portion of the chain corresponds to phenylalanine 216–threonine 248. Residues isoleucine 249 to cysteine 271 traverse the membrane as a helical segment. The Extracellular portion of the chain corresponds to proline 272 to phenylalanine 280. A helical transmembrane segment spans residues methionine 281–leucine 304. The Cytoplasmic portion of the chain corresponds to arginine 305–tyrosine 332. The S-palmitoyl cysteine moiety is linked to residue cysteine 318.

This sequence belongs to the G-protein coupled receptor 1 family. Homodimer; disulfide-linked, also forms higher order oligomers. Interacts with GNAS. Interacts with ATRNL1. Interacts with MGRN1; this interaction competes with GNAS-binding and thus inhibits agonist-induced cAMP production. Interacts with MRAP and MRAP2; these associated factors increase ligand-sensitivity and generation of cAMP.

It localises to the cell membrane. Its function is as follows. Hormone receptor that acts as a key component of the leptin-melanocortin pathway at the intersection of homeostatic maintenance of energetic state. Plays a role in regulating food intake: activation by a stimulating hormone such as anorexigenic alpha-melanocyte stimulating hormone (alpha-MSH) inhibits appetite, whereas binding to a natural antagonist like Agouti-related protein/AGRP promotes appetite. G-protein-coupled receptor that activates conventional Galphas signaling leading to induction of anorexogenic signaling in the hypothalamus to result in negative energy balance. Regulates the firing activity of neurons from the hypothalamus by alpha-MSH and AGRP independently of Galphas signaling by ligand-induced coupling of closure of inwardly rectifying potassium channel KCNJ13. In intestinal epithelial cells, plays a role in the inhibition of hepatic glucose production via nesfatin-1/NUCB2 leading to increased cyclic adenosine monophosphate (cAMP) levels and glucagon-like peptide 1 (GLP-1) secretion in the intestinal epithelium. This is Melanocortin receptor 4 (MC4R) from Macaca fascicularis (Crab-eating macaque).